The following is a 385-amino-acid chain: Tetraacyldisaccharide 4'-kinase (385 aa).

60-67 (TVGGSGKT) serves as a coordination point for ATP.

Belongs to the LpxK family.

It carries out the reaction a lipid A disaccharide + ATP = a lipid IVA + ADP + H(+). Its pathway is glycolipid biosynthesis; lipid IV(A) biosynthesis; lipid IV(A) from (3R)-3-hydroxytetradecanoyl-[acyl-carrier-protein] and UDP-N-acetyl-alpha-D-glucosamine: step 6/6. Its function is as follows. Transfers the gamma-phosphate of ATP to the 4'-position of a tetraacyldisaccharide 1-phosphate intermediate (termed DS-1-P) to form tetraacyldisaccharide 1,4'-bis-phosphate (lipid IVA). The chain is Tetraacyldisaccharide 4'-kinase from Psychrobacter arcticus (strain DSM 17307 / VKM B-2377 / 273-4).